Reading from the N-terminus, the 573-residue chain is Probable D-xylulose kinase A (573 aa).

Substrate is bound by residues histidine 97, arginine 168, aspartate 284, and asparagine 285. ATP is bound by residues tryptophan 366, 471 to 472 (GG), and asparagine 475.

This sequence belongs to the FGGY kinase family.

It localises to the cytoplasm. It catalyses the reaction D-xylulose + ATP = D-xylulose 5-phosphate + ADP + H(+). Functionally, highly specific D-xylulose kinase which participates in the catabolism of xylose. Xylose is a major component of hemicelluloses such as xylan. Most fungi utilize D-xylose via three enzymatic reactions, xylose reductase (XR), xylitol dehydrogenase (XDH), and xylulokinase, to form xylulose 5-phosphate, which enters pentose phosphate pathway. This is Probable D-xylulose kinase A (xkiA) from Aspergillus fumigatus (strain ATCC MYA-4609 / CBS 101355 / FGSC A1100 / Af293) (Neosartorya fumigata).